Here is an 883-residue protein sequence, read N- to C-terminus: Mitogen-activated protein kinase kinase kinase YODA (883 aa).

Disordered stretches follow at residues 28–193 (GFAS…AEMF), 303–364 (CSPE…PPLL), and 376–396 (SAATSPSVPRSPARAEATVSP). The span at 57–72 (SRLPSRSPSPSTRVSR) shows a compositional bias: low complexity. A compositionally biased stretch (polar residues) spans 94–105 (VTSTDSGMNGSQ). The segment covering 143-165 (SVSSGSSVGDIPSDSLLSPLASD) has biased composition (low complexity). Polar residues-rich tracts occupy residues 167–189 (ENGNRTPVNISSRDQSMHSNKNS) and 314–328 (RMTSPGPSSRIQSGA). Positions 400 to 656 (WKKGRLLGMG…AAQLLDHAFV (257 aa)) constitute a Protein kinase domain. ATP contacts are provided by residues 406-414 (LGMGSFGHV) and Lys429. Asp525 (proton acceptor) is an active-site residue. Disordered regions lie at residues 712–773 (GSGF…GAIP) and 787–838 (EGIG…IQPG). Residues 733–756 (SPIFHSHSPHISGRRSPSPISSPH) are compositionally biased toward low complexity.

Belongs to the protein kinase superfamily. STE Ser/Thr protein kinase family. MAP kinase kinase kinase subfamily. Interacts with ASK7. Interacts with BSK12/SSP. Binds to BASL and MPK6. In terms of tissue distribution, expressed in roots, leaves, guard cells, stems, flowers and siliques.

Its subcellular location is the cytoplasm. It is found in the cell cortex. It localises to the cell membrane. The catalysed reaction is L-seryl-[protein] + ATP = O-phospho-L-seryl-[protein] + ADP + H(+). The enzyme catalyses L-threonyl-[protein] + ATP = O-phospho-L-threonyl-[protein] + ADP + H(+). With respect to regulation, contains an N-terminal autoinhibitory domain. Functionally, functions in a MAP kinase cascade that acts as a molecular switch to regulate the first cell fate decisions in the zygote and the early embryo. Promotes elongation of the zygote and development of its basal daughter cell into the extra-embryonic suspensor. In stomatal development, acts downstream of the LRR receptor TMM, but upstream of the MKK4/MKK5-MPK3/MPK6 module to regulate stomatal cell fate before the guard mother cell (GMC) is specified. Plays a central role in both guard cell identity and pattern formation. This MAPK cascade also functions downstream of the ER receptor in regulating coordinated local cell proliferation, which shapes the morphology of plant organs. Upon brassinosteroid signaling, is inhibited by phosphorylation of its auto-inhibitory N-terminal domain by the GSK3-like kinase ASK7. The protein is Mitogen-activated protein kinase kinase kinase YODA of Arabidopsis thaliana (Mouse-ear cress).